The chain runs to 44 residues: Large ribosomal subunit protein bL36 (44 aa).

The protein belongs to the bacterial ribosomal protein bL36 family.

This chain is Large ribosomal subunit protein bL36, found in Pseudoalteromonas translucida (strain TAC 125).